A 160-amino-acid chain; its full sequence is uncharacterized protein (160 aa).

This is an uncharacterized protein from Escherichia coli (strain K12).